We begin with the raw amino-acid sequence, 231 residues long: Somatolactin-1 (231 aa).

Residues 1–24 form the signal peptide; it reads MRMIRAIKQGQWAVLLWPYLLTAS. 3 disulfides stabilise this stretch: Cys29–Cys39, Cys89–Cys205, and Cys222–Cys230. N-linked (GlcNAc...) asparagine glycosylation occurs at Asn145.

This sequence belongs to the somatotropin/prolactin family. As to expression, pituitary gland.

It is found in the secreted. This is Somatolactin-1 from Sparus aurata (Gilthead sea bream).